A 38-amino-acid polypeptide reads, in one-letter code: GVEINVKCTGSHQCIKPCKDAGMRFGKCINRKCHCTPK.

3 cysteine pairs are disulfide-bonded: cysteine 8–cysteine 28, cysteine 14–cysteine 33, and cysteine 18–cysteine 35. Lysine 38 is modified (lysine amide).

The protein belongs to the short scorpion toxin superfamily. Potassium channel inhibitor family. Alpha-KTx 03 subfamily. As to expression, expressed by the venom gland.

The protein resides in the secreted. Functionally, potent inhibitor of voltage-dependent potassium channels, with a preference for Kv1.3/KCNA3 versus Kv1.2/KCNA2. The polypeptide is Potassium channel toxin alpha-KTx 3.12 (Androctonus amoreuxi (African fattail scorpion)).